Here is a 117-residue protein sequence, read N- to C-terminus: Aspartate 1-decarboxylase (117 aa).

The active-site Schiff-base intermediate with substrate; via pyruvic acid is Ser-25. The residue at position 25 (Ser-25) is a Pyruvic acid (Ser). A substrate-binding site is contributed by Thr-57. The active-site Proton donor is Tyr-58. Gly-73–Ala-75 contacts substrate.

The protein belongs to the PanD family. In terms of assembly, heterooctamer of four alpha and four beta subunits. It depends on pyruvate as a cofactor. In terms of processing, is synthesized initially as an inactive proenzyme, which is activated by self-cleavage at a specific serine bond to produce a beta-subunit with a hydroxyl group at its C-terminus and an alpha-subunit with a pyruvoyl group at its N-terminus.

It localises to the cytoplasm. It catalyses the reaction L-aspartate + H(+) = beta-alanine + CO2. The protein operates within cofactor biosynthesis; (R)-pantothenate biosynthesis; beta-alanine from L-aspartate: step 1/1. Its function is as follows. Catalyzes the pyruvoyl-dependent decarboxylation of aspartate to produce beta-alanine. The chain is Aspartate 1-decarboxylase from Bacteroides fragilis (strain ATCC 25285 / DSM 2151 / CCUG 4856 / JCM 11019 / LMG 10263 / NCTC 9343 / Onslow / VPI 2553 / EN-2).